A 324-amino-acid polypeptide reads, in one-letter code: Adenosine kinase (324 aa).

Residues serine 8, aspartate 12, serine 36, glycine 48, asparagine 52, phenylalanine 102, phenylalanine 116, and 172 to 173 (QQ) each bind substrate. ATP contacts are provided by residues asparagine 195, 223–228 (TLGPKG), and glycine 256. Aspartate 257 serves as a coordination point for substrate. Residue aspartate 257 is the Proton acceptor of the active site.

Belongs to the carbohydrate kinase PfkB family. As to quaternary structure, homodimer. Mg(2+) is required as a cofactor.

The catalysed reaction is adenosine + ATP = AMP + ADP + H(+). The enzyme catalyses adenosine + GTP = GDP + AMP + H(+). It carries out the reaction dGTP + adenosine = dGDP + AMP + H(+). The protein operates within purine metabolism; AMP biosynthesis via salvage pathway; AMP from adenosine: step 1/1. In terms of biological role, catalyzes the phosphorylation of adenosine to adenosine monophosphate (AMP). Prefers dGTP and GTP to ATP as phosphate donors in vitro. The sequence is that of Adenosine kinase (adoK) from Mycobacterium bovis (strain ATCC BAA-935 / AF2122/97).